Here is a 493-residue protein sequence, read N- to C-terminus: Dipeptide permease D (493 aa).

A run of 13 helical transmembrane segments spans residues 14–34, 49–69, 91–111, 138–158, 167–187, 212–232, 235–255, 267–287, 312–332, 344–364, 379–399, 413–433, and 458–478; these read VVALQIWEYFSFYGMRALLIL, ELFSAYCSLVYVTPILGGYLA, LVLGASEIAPTFLYLSLAIIV, GGFSLLYAAGNIGSIVAPIAC, WAMGFALAAIGMLAGLVIFLC, NWGWLLILLVAAPLLITVLFW, WSVYALIVATAISLVVLAKIY, LGLIVTLTLFSMLFWAFAQQG, MFQSVNAFAVMLCGVVLAWLV, IWGKFALGLGLMSAGFCILTL, LMVLGLAVMGFAELFIDPVAM, VLTGIYMLLSGAIANYLAGVI, and VFEQITWGALACVGVVLLIWL.

The protein belongs to the major facilitator superfamily. Proton-dependent oligopeptide transporter (POT/PTR) (TC 2.A.17) family. DtpD subfamily.

It localises to the cell inner membrane. In terms of biological role, probable proton-dependent permease that transports dipeptides. This chain is Dipeptide permease D, found in Salmonella paratyphi C (strain RKS4594).